A 273-amino-acid polypeptide reads, in one-letter code: MADHMMAMNHGRFPDGTNGLHHHPAHRMGMGQFPSPHHHQQQQPQHAFNALMGEHIHYGAGTMNATSGIRHAMGPGTVNGGHPPSALAPAARFNNSQFMAPPVASQGGSLPASMQLQKLNNQYFNHHPYPHNHYMPDLHPAAGHQMNGTNQHFRDCNPKHSGGSSTPGGSGGSSTPGGSGGSAGGGAGSSNSGGGSGGSGSSNMPASVAHVPAAMLPPNVIDTDFIDEEVLMSLVIXMGLDRIKELPELWLGQNEFDFMTDFVCKQQPSRVSC.

The segment at 137–204 is disordered; that stretch reads DLHPAAGHQM…GSGGSGSSNM (68 aa). Residues 165-200 show a composition bias toward gly residues; that stretch reads STPGGSGGSSTPGGSGGSAGGGAGSSNSGGGSGGSG.

The protein belongs to the CITED family. Interacts (via C-terminus) with SMAD2. Interacts (via C-terminus) with SMAD3 (via MH2 domain). Interacts with LHX2 (via LIM domains). Interacts with WT1. Interacts (via C-terminus) with EP300 (via CH1 domain); the interaction is stimulated in response to hypoxia. Interacts with PPARA. Interacts (via C-terminus) with TFAP2A, TFAP2B and TFAP2C.

Its subcellular location is the nucleus. Transcriptional coactivator of the p300/CBP-mediated transcription complex. Acts as a bridge, linking TFAP2 transcription factors and the p300/CBP transcriptional coactivator complex in order to stimulate TFAP2-mediated transcriptional activation. Positively regulates TGF-beta signaling through its association with the SMAD/p300/CBP-mediated transcriptional coactivator complex. Stimulates the peroxisome proliferator-activated receptors PPARA transcriptional activity. Enhances estrogen-dependent transactivation mediated by estrogen receptors. Also acts as a transcriptional corepressor; interferes with the binding of the transcription factors HIF1A or STAT2 and the p300/CBP transcriptional coactivator complex. Participates in sex determination and early gonad development by stimulating transcription activation of SRY. Plays a role in controlling left-right patterning during embryogenesis; potentiates transcriptional activation of NODAL-mediated gene transcription in the left lateral plate mesoderm (LPM). Plays an essential role in differentiation of the adrenal cortex from the adrenogonadal primordium (AGP); stimulates WT1-mediated transcription activation thereby up-regulating the nuclear hormone receptor NR5A1 promoter activity. Associates with chromatin to the PITX2 P1 promoter region. The polypeptide is Cbp/p300-interacting transactivator 2 (CITED2) (Saguinus labiatus (Red-chested mustached tamarin)).